The chain runs to 237 residues: Ribonuclease PH (237 aa).

Phosphate is bound by residues arginine 86 and 124 to 126 (GTR).

It belongs to the RNase PH family. In terms of assembly, homohexameric ring arranged as a trimer of dimers.

It carries out the reaction tRNA(n+1) + phosphate = tRNA(n) + a ribonucleoside 5'-diphosphate. Functionally, phosphorolytic 3'-5' exoribonuclease that plays an important role in tRNA 3'-end maturation. Removes nucleotide residues following the 3'-CCA terminus of tRNAs; can also add nucleotides to the ends of RNA molecules by using nucleoside diphosphates as substrates, but this may not be physiologically important. Probably plays a role in initiation of 16S rRNA degradation (leading to ribosome degradation) during starvation. This Bradyrhizobium sp. (strain BTAi1 / ATCC BAA-1182) protein is Ribonuclease PH.